A 134-amino-acid chain; its full sequence is Large ribosomal subunit protein eL14y (134 aa).

It belongs to the eukaryotic ribosomal protein eL14 family.

The chain is Large ribosomal subunit protein eL14y (RPL14B) from Arabidopsis thaliana (Mouse-ear cress).